The following is a 456-amino-acid chain: Putative alanyl-tRNA editing protein alaX (456 aa).

Residues His-125, His-129, Cys-240, and His-244 each coordinate Zn(2+).

Belongs to the class-II aminoacyl-tRNA synthetase family. Alax-L subfamily. Zn(2+) serves as cofactor.

In terms of biological role, may function in trans to edit the amino acid moiety from incorrectly charged tRNA(Ala). The polypeptide is Putative alanyl-tRNA editing protein alaX (Saccharomyces cerevisiae (strain ATCC 204508 / S288c) (Baker's yeast)).